The sequence spans 241 residues: Zinc finger CCHC domain-containing protein 24 (241 aa).

Ser-65 and Ser-93 each carry phosphoserine. The CCHC-type zinc-finger motif lies at 132–149 (YLCHLCFNKGHYIKDCPQ).

This chain is Zinc finger CCHC domain-containing protein 24 (ZCCHC24), found in Homo sapiens (Human).